The following is a 59-amino-acid chain: Large ribosomal subunit protein uL30 (59 aa).

It belongs to the universal ribosomal protein uL30 family. Part of the 50S ribosomal subunit.

The chain is Large ribosomal subunit protein uL30 from Photobacterium profundum (strain SS9).